Consider the following 310-residue polypeptide: Ribosomal RNA small subunit methyltransferase H (310 aa).

Residues Ala32 to His34, Asp52, Phe79, Asp100, and Gln107 contribute to the S-adenosyl-L-methionine site.

Belongs to the methyltransferase superfamily. RsmH family.

The protein localises to the cytoplasm. The enzyme catalyses cytidine(1402) in 16S rRNA + S-adenosyl-L-methionine = N(4)-methylcytidine(1402) in 16S rRNA + S-adenosyl-L-homocysteine + H(+). Specifically methylates the N4 position of cytidine in position 1402 (C1402) of 16S rRNA. In Bacillus pumilus (strain SAFR-032), this protein is Ribosomal RNA small subunit methyltransferase H.